Consider the following 121-residue polypeptide: Small ribosomal subunit protein eS24 (121 aa).

The protein belongs to the eukaryotic ribosomal protein eS24 family.

In Pyrobaculum aerophilum (strain ATCC 51768 / DSM 7523 / JCM 9630 / CIP 104966 / NBRC 100827 / IM2), this protein is Small ribosomal subunit protein eS24.